The sequence spans 241 residues: Probable transcriptional regulatory protein azo0574 (241 aa).

The disordered stretch occupies residues 1-21 (MAGHSKWANIQHRKGRQDAKR).

The protein belongs to the TACO1 family.

It is found in the cytoplasm. The protein is Probable transcriptional regulatory protein azo0574 of Azoarcus sp. (strain BH72).